Here is a 199-residue protein sequence, read N- to C-terminus: Recombination protein RecR (199 aa).

The C4-type zinc finger occupies 57–72; it reads CSVCGNITEDDPCPIC. One can recognise a Toprim domain in the interval 80–176; the sequence is SRVLVVERSR…KVTRLAHGLS (97 aa).

This sequence belongs to the RecR family.

In terms of biological role, may play a role in DNA repair. It seems to be involved in an RecBC-independent recombinational process of DNA repair. It may act with RecF and RecO. The sequence is that of Recombination protein RecR from Limosilactobacillus fermentum (strain NBRC 3956 / LMG 18251) (Lactobacillus fermentum).